A 624-amino-acid polypeptide reads, in one-letter code: Mannosyl-oligosaccharide 1,2-alpha-mannosidase MNS3 (624 aa).

Topologically, residues 1-43 are cytoplasmic; that stretch reads MSKSLPYSVKDIHYDNAKFRHRSPLKVFSQSLLTLSTKRNYAS. The helical; Signal-anchor for type II membrane protein transmembrane segment at 44–64 threads the bilayer; it reads CSTGKFLILILFFGVACLMLM. Over 65–624 the chain is Lumenal; sequence SKSPNESGLN…AHPLPIRRNT (560 aa). N69 and N114 each carry an N-linked (GlcNAc...) asparagine glycan. Positions 91–123 are disordered; it reads LRKPPRLPPRLSPDEGQLRGSSTNGSTISNSDP. Positions 110 to 121 are enriched in low complexity; sequence GSSTNGSTISNS. E212 functions as the Proton donor in the catalytic mechanism. N236 carries an N-linked (GlcNAc...) asparagine glycan. Residue D357 is part of the active site. N377 carries N-linked (GlcNAc...) asparagine glycosylation. A disulfide bridge connects residues C428 and C471. The active-site Proton donor is E485. N503 carries an N-linked (GlcNAc...) asparagine glycan. The active site involves E526. T613 serves as a coordination point for Ca(2+).

It belongs to the glycosyl hydrolase 47 family. Ca(2+) is required as a cofactor. It depends on Mn(2+) as a cofactor. The cofactor is Mg(2+). As to expression, expressed in flowers, siliques, stems, leaves, roots, stamens and sepals.

The protein resides in the golgi apparatus. It is found in the cis-Golgi network membrane. The enzyme catalyses N(4)-(alpha-D-Man-(1-&gt;2)-alpha-D-Man-(1-&gt;2)-alpha-D-Man-(1-&gt;3)-[alpha-D-Man-(1-&gt;2)-alpha-D-Man-(1-&gt;3)-[alpha-D-Man-(1-&gt;2)-alpha-D-Man-(1-&gt;6)]-alpha-D-Man-(1-&gt;6)]-beta-D-Man-(1-&gt;4)-beta-D-GlcNAc-(1-&gt;4)-beta-D-GlcNAc)-L-asparaginyl-[protein] (N-glucan mannose isomer 9A1,2,3B1,2,3) + 4 H2O = N(4)-(alpha-D-Man-(1-&gt;3)-[alpha-D-Man-(1-&gt;3)-[alpha-D-Man-(1-&gt;6)]-alpha-D-Man-(1-&gt;6)]-beta-D-Man-(1-&gt;4)-beta-D-GlcNAc-(1-&gt;4)-beta-D-GlcNAc)-L-asparaginyl-[protein] (N-glucan mannose isomer 5A1,2) + 4 beta-D-mannose. The catalysed reaction is N(4)-(alpha-D-Man-(1-&gt;2)-alpha-D-Man-(1-&gt;2)-alpha-D-Man-(1-&gt;3)-[alpha-D-Man-(1-&gt;3)-[alpha-D-Man-(1-&gt;2)-alpha-D-Man-(1-&gt;6)]-alpha-D-Man-(1-&gt;6)]-beta-D-Man-(1-&gt;4)-beta-D-GlcNAc-(1-&gt;4)-beta-D-GlcNAc)-L-asparaginyl-[protein] (N-glucan mannose isomer 8A1,2,3B1,3) + 3 H2O = N(4)-(alpha-D-Man-(1-&gt;3)-[alpha-D-Man-(1-&gt;3)-[alpha-D-Man-(1-&gt;6)]-alpha-D-Man-(1-&gt;6)]-beta-D-Man-(1-&gt;4)-beta-D-GlcNAc-(1-&gt;4)-beta-D-GlcNAc)-L-asparaginyl-[protein] (N-glucan mannose isomer 5A1,2) + 3 beta-D-mannose. It catalyses the reaction N(4)-(alpha-D-Man-(1-&gt;2)-alpha-D-Man-(1-&gt;2)-alpha-D-Man-(1-&gt;3)-[alpha-D-Man-(1-&gt;2)-alpha-D-Man-(1-&gt;3)-[alpha-D-Man-(1-&gt;2)-alpha-D-Man-(1-&gt;6)]-alpha-D-Man-(1-&gt;6)]-beta-D-Man-(1-&gt;4)-beta-D-GlcNAc-(1-&gt;4)-beta-D-GlcNAc)-L-asparaginyl-[protein] (N-glucan mannose isomer 9A1,2,3B1,2,3) + H2O = N(4)-(alpha-D-Man-(1-&gt;2)-alpha-D-Man-(1-&gt;2)-alpha-D-Man-(1-&gt;3)-[alpha-D-Man-(1-&gt;3)-[alpha-D-Man-(1-&gt;2)-alpha-D-Man-(1-&gt;6)]-alpha-D-Man-(1-&gt;6)]-beta-D-Man-(1-&gt;4)-beta-D-GlcNAc-(1-&gt;4)-beta-D-GlcNAc)-L-asparaginyl-[protein] (N-glucan mannose isomer 8A1,2,3B1,3) + beta-D-mannose. It functions in the pathway protein modification; protein glycosylation. Inhibited by kifunensine and 1-deoxymannojirimycin, but not by swainsonine. Its function is as follows. Class I alpha-mannosidase essential for early N-glycan processing. Removes preferentially alpha-1,2-linked mannose residues from Man(9)GlcNAc(2) to produce Man(8)GlcNAc(2). Involved in root development and cell wall biosynthesis. This is Mannosyl-oligosaccharide 1,2-alpha-mannosidase MNS3 (MNS3) from Arabidopsis thaliana (Mouse-ear cress).